The following is a 69-amino-acid chain: Fungal defensin oryzeasin (69 aa).

Residues 1–18 (MKLLTVAFSLLLLGQVHA) form the signal peptide. Residues 19-26 (SPLVLDKR) constitute a propeptide that is removed on maturation. 3 disulfides stabilise this stretch: cysteine 29/cysteine 60, cysteine 44/cysteine 66, and cysteine 48/cysteine 68.

This sequence belongs to the invertebrate defensin family.

Its subcellular location is the secreted. It is found in the target cell membrane. Functionally, shows antibacterial activity against numerous Gram-positive bacteria. It selectively inhibits peptidoglycan biosynthesis through complex formation with the cell wall precursor lipid II (1:1 molar ratio) thus inhibiting cell wall synthesis. The sequence is that of Fungal defensin oryzeasin from Aspergillus oryzae (strain ATCC 42149 / RIB 40) (Yellow koji mold).